The chain runs to 125 residues: Gem-associated protein 7 (125 aa).

An N-acetylmethionine modification is found at M1. The 29-residue stretch at M1 to G29 folds into the SUZ-C domain. Residues M1 to A52 form a disordered region. Phosphothreonine is present on T3. The Sm domain maps to R59–P125.

It belongs to the gemin-7 family. As to quaternary structure, part of the core SMN complex that contains SMN1, GEMIN2/SIP1, DDX20/GEMIN3, GEMIN4, GEMIN5, GEMIN6, GEMIN7, GEMIN8 and STRAP/UNRIP. Part of the SMN-Sm complex that contains SMN1, GEMIN2/SIP1, DDX20/GEMIN3, GEMIN4, GEMIN5, GEMIN6, GEMIN7, GEMIN8, STRAP/UNRIP and the Sm proteins SNRPB, SNRPD1, SNRPD2, SNRPD3, SNRPE, SNRPF and SNRPG. Interacts with GEMIN6; the interaction is direct. Interacts with STRAP/UNRIP; the interaction is direct. Interacts with GEMIN8; the interaction is direct. Interacts with SNRPB, SNRPD2, SNRPD3 and SNRPE; the interaction is direct.

The protein resides in the nucleus. The protein localises to the nucleoplasm. It localises to the gem. Its subcellular location is the cytoplasm. In terms of biological role, the SMN complex catalyzes the assembly of small nuclear ribonucleoproteins (snRNPs), the building blocks of the spliceosome, and thereby plays an important role in the splicing of cellular pre-mRNAs. Most spliceosomal snRNPs contain a common set of Sm proteins SNRPB, SNRPD1, SNRPD2, SNRPD3, SNRPE, SNRPF and SNRPG that assemble in a heptameric protein ring on the Sm site of the small nuclear RNA to form the core snRNP (Sm core). In the cytosol, the Sm proteins SNRPD1, SNRPD2, SNRPE, SNRPF and SNRPG are trapped in an inactive 6S pICln-Sm complex by the chaperone CLNS1A that controls the assembly of the core snRNP. To assemble core snRNPs, the SMN complex accepts the trapped 5Sm proteins from CLNS1A forming an intermediate. Binding of snRNA inside 5Sm triggers eviction of the SMN complex, thereby allowing binding of SNRPD3 and SNRPB to complete assembly of the core snRNP. This is Gem-associated protein 7 (GEMIN7) from Bos taurus (Bovine).